Reading from the N-terminus, the 388-residue chain is Galactokinase (388 aa).

A substrate-binding site is contributed by 32–35 (EHTD). ATP contacts are provided by residues Ser-66 and 123–129 (GASLSSS). Mg(2+) is bound by residues Ser-129 and Glu-161. Asp-173 serves as the catalytic Proton acceptor. Substrate is bound at residue Tyr-223.

It belongs to the GHMP kinase family. GalK subfamily.

The protein resides in the cytoplasm. It catalyses the reaction alpha-D-galactose + ATP = alpha-D-galactose 1-phosphate + ADP + H(+). It functions in the pathway carbohydrate metabolism; galactose metabolism. Functionally, catalyzes the transfer of the gamma-phosphate of ATP to D-galactose to form alpha-D-galactose-1-phosphate (Gal-1-P). This is Galactokinase from Staphylococcus carnosus (strain TM300).